Consider the following 680-residue polypeptide: DNA ligase (680 aa).

Residues Asp32–Asp36, Ser81–Leu82, and Glu115 contribute to the NAD(+) site. Catalysis depends on Lys117, which acts as the N6-AMP-lysine intermediate. The NAD(+) site is built by Arg138, Glu175, Lys291, and Lys315. Zn(2+) is bound by residues Cys409, Cys412, Cys427, and Cys432. One can recognise a BRCT domain in the interval Ala600–Pro680.

It belongs to the NAD-dependent DNA ligase family. LigA subfamily. Mg(2+) is required as a cofactor. The cofactor is Mn(2+).

It catalyses the reaction NAD(+) + (deoxyribonucleotide)n-3'-hydroxyl + 5'-phospho-(deoxyribonucleotide)m = (deoxyribonucleotide)n+m + AMP + beta-nicotinamide D-nucleotide.. In terms of biological role, DNA ligase that catalyzes the formation of phosphodiester linkages between 5'-phosphoryl and 3'-hydroxyl groups in double-stranded DNA using NAD as a coenzyme and as the energy source for the reaction. It is essential for DNA replication and repair of damaged DNA. The chain is DNA ligase from Synechococcus sp. (strain CC9902).